The primary structure comprises 285 residues: Ubiquinone biosynthesis protein COQ4, mitochondrial (285 aa).

Residues 1-11 (MPPTVRQGIRT) constitute a mitochondrion transit peptide. The Zn(2+) site is built by H166, D167, H170, and E182.

The protein belongs to the COQ4 family. Component of a multi-subunit COQ enzyme complex, composed of at least COQ3, COQ4, COQ5, COQ6, COQ7 and COQ9. Requires Zn(2+) as cofactor.

It is found in the mitochondrion inner membrane. The catalysed reaction is a 4-hydroxy-3-methoxy-5-(all-trans-polyprenyl)benzoate + H(+) = a 2-methoxy-6-(all-trans-polyprenyl)phenol + CO2. It participates in cofactor biosynthesis; ubiquinone biosynthesis. Its function is as follows. Lyase that catalyzes the C1-decarboxylation of 4-hydroxy-3-methoxy-5-(all-trans-polyprenyl)benzoic acid into 2-methoxy-6-(all-trans-polyprenyl)phenol during ubiquinone biosynthesis. In Paracoccidioides brasiliensis (strain Pb18), this protein is Ubiquinone biosynthesis protein COQ4, mitochondrial.